The chain runs to 245 residues: Probable membrane transporter protein YdhB (245 aa).

Helical transmembrane passes span 1–21 (MLII…GAGG), 34–56 (HIPI…LSGA), 71–91 (LIVG…TSFI), 98–118 (YLTA…LFIL), 137–157 (ILGI…APFI), 177–197 (MLVI…EGFV), 199–219 (YVLL…GAKF), and 225–245 (KVVL…LLLF).

Belongs to the 4-toluene sulfonate uptake permease (TSUP) (TC 2.A.102) family.

The protein resides in the cell membrane. This chain is Probable membrane transporter protein YdhB (ydhB), found in Bacillus subtilis (strain 168).